The chain runs to 197 residues: MKFHLVLLLAIVPLTLARHPHGKFNRHASYDDREKHRGYRKENDYLNYDLKGKFSRTRQAYLHGSFDKYGNENERGRYDDQGKYSLAGKSAHDGKYGMYGNMYAKGDFKAYGNEDEGAKFEEVTTFRRGGGYDSYGKKKSYDDYDTKGHLKKFANKGRQSKFDMYGNVKADGQAISNGNMNATVCLTPMANTISMAK.

The signal sequence occupies residues 1-17; sequence MKFHLVLLLAIVPLTLA.

In Fasciola hepatica (Liver fluke), this protein is Putative eggshell protein.